The following is a 389-amino-acid chain: MGNPEASCTPPAVLGSQTGLPHANVSAPPNNCSAPSHIYQDSIALPWKVLLVVLLALITLATTLSNAFVIATVYRTRKLHTPANYLIASLAFTDLLVSILVMPISTMYTVTGRWTLGQALCDFWLSSDITCCTASIMHLCVIALDRYWAITDAVGYSAKRTPRRAAGMIALVWVFSICISLPPFFWRQAKAEEEVLDCLVNTDHVLYTVYSTGGAFYLPTLLLIALYGRIYVEARSRILKQTPNKTGKRLTRAQLITDSPGSTSSVTSINSRAPEVPCDSGSPVYVNQVKVRVSDALLEKKKLMAARERKATKTLGVILGAFIVCWLPFFIISLVMPICKDACWFHMAIFDFFTWLGYLNSLINPIIYTMSNEDFKQAFHKLIRFKCTT.

The Extracellular portion of the chain corresponds to 1–45 (MGNPEASCTPPAVLGSQTGLPHANVSAPPNNCSAPSHIYQDSIAL). 2 N-linked (GlcNAc...) asparagine glycosylation sites follow: asparagine 24 and asparagine 31. Residues 46–71 (PWKVLLVVLLALITLATTLSNAFVIA) traverse the membrane as a helical segment. Topologically, residues 72 to 85 (TVYRTRKLHTPANY) are cytoplasmic. Residues 86 to 110 (LIASLAFTDLLVSILVMPISTMYTV) form a helical membrane-spanning segment. At 111–118 (TGRWTLGQ) the chain is on the extracellular side. A helical membrane pass occupies residues 119–144 (ALCDFWLSSDITCCTASIMHLCVIAL). Cysteine 121 and cysteine 198 are disulfide-bonded. Ergotamine is bound by residues aspartate 128 and threonine 133. The DRY motif; important for ligand-induced conformation changes and signaling signature appears at 145–147 (DRY). The Cytoplasmic portion of the chain corresponds to 145 to 164 (DRYWAITDAVGYSAKRTPRR). Residues 165-183 (AAGMIALVWVFSICISLPP) traverse the membrane as a helical segment. At 184-204 (FFWRQAKAEEEVLDCLVNTDH) the chain is on the extracellular side. Valine 200 contributes to the ergotamine binding site. The chain crosses the membrane as a helical span at residues 205–228 (VLYTVYSTGGAFYLPTLLLIALYG). Over 229–314 (RIYVEARSRI…AARERKATKT (86 aa)) the chain is Cytoplasmic. Residues 315–336 (LGVILGAFIVCWLPFFIISLVM) form a helical membrane-spanning segment. The Extracellular segment spans residues 337-346 (PICKDACWFH). Residues 347-369 (MAIFDFFTWLGYLNSLINPIIYT) traverse the membrane as a helical segment. The short motif at 364-368 (NPIIY) is the NPxxY motif; important for ligand-induced conformation changes and signaling element. Residues 370–389 (MSNEDFKQAFHKLIRFKCTT) are Cytoplasmic-facing. A lipid anchor (S-palmitoyl cysteine) is attached at cysteine 387.

It belongs to the G-protein coupled receptor 1 family. Homodimer. Heterodimer with HTR1D. Post-translationally, phosphorylated. Desensitization of the receptor may be mediated by its phosphorylation. In terms of processing, palmitoylated.

Its subcellular location is the cell membrane. Functionally, G-protein coupled receptor for 5-hydroxytryptamine (serotonin). Also functions as a receptor for ergot alkaloid derivatives, various anxiolytic and antidepressant drugs and other psychoactive substances, such as lysergic acid diethylamide (LSD). Ligand binding causes a conformation change that triggers signaling via guanine nucleotide-binding proteins (G proteins) and modulates the activity of downstream effectors, such as adenylate cyclase. HTR1B is coupled to G(i)/G(o) G alpha proteins and mediates inhibitory neurotransmission by inhibiting adenylate cyclase activity. Arrestin family members inhibit signaling via G proteins and mediate activation of alternative signaling pathways. Regulates the release of 5-hydroxytryptamine, dopamine and acetylcholine in the brain, and thereby affects neural activity, nociceptive processing, pain perception, mood and behavior. Besides, plays a role in vasoconstriction of cerebral arteries. This Cavia porcellus (Guinea pig) protein is 5-hydroxytryptamine receptor 1B (HTR1B).